The sequence spans 152 residues: Transcriptional regulator MraZ (152 aa).

SpoVT-AbrB domains are found at residues V5–E52 and A81–L124.

It belongs to the MraZ family. In terms of assembly, forms oligomers.

The protein resides in the cytoplasm. The protein localises to the nucleoid. The protein is Transcriptional regulator MraZ of Halorhodospira halophila (strain DSM 244 / SL1) (Ectothiorhodospira halophila (strain DSM 244 / SL1)).